The following is a 338-amino-acid chain: Glycerol-3-phosphate dehydrogenase [NAD(P)+] (338 aa).

3 residues coordinate NADPH: Ser-13, Trp-14, and Lys-108. Residues Lys-108, Gly-139, and Ser-141 each coordinate sn-glycerol 3-phosphate. Ala-143 serves as a coordination point for NADPH. Residues Lys-194, Asp-247, Ser-257, Arg-258, and Asn-259 each contribute to the sn-glycerol 3-phosphate site. Lys-194 serves as the catalytic Proton acceptor. Arg-258 contributes to the NADPH binding site. NADPH contacts are provided by Val-282 and Glu-284.

It belongs to the NAD-dependent glycerol-3-phosphate dehydrogenase family.

The protein resides in the cytoplasm. The catalysed reaction is sn-glycerol 3-phosphate + NAD(+) = dihydroxyacetone phosphate + NADH + H(+). The enzyme catalyses sn-glycerol 3-phosphate + NADP(+) = dihydroxyacetone phosphate + NADPH + H(+). The protein operates within membrane lipid metabolism; glycerophospholipid metabolism. Its function is as follows. Catalyzes the reduction of the glycolytic intermediate dihydroxyacetone phosphate (DHAP) to sn-glycerol 3-phosphate (G3P), the key precursor for phospholipid synthesis. This is Glycerol-3-phosphate dehydrogenase [NAD(P)+] from Streptococcus pyogenes serotype M12 (strain MGAS9429).